Here is an 863-residue protein sequence, read N- to C-terminus: uncharacterized protein (863 aa).

An N-terminal signal peptide occupies residues 1-29 (MHQSGSVSLCRSAISVLVATALYSPIALA). Residues 595 to 863 (GVSYDTAMWS…NTQAGVVWTF (269 aa)) enclose the Autotransporter domain.

It is found in the cell outer membrane. This is an uncharacterized protein from Escherichia coli (strain K12).